A 648-amino-acid chain; its full sequence is Phosphatidylinositol polyphosphate 5-phosphatase type IV (648 aa).

The interval 1–64 is disordered; sequence MPSKSACLRH…PLSMPAKPSN (64 aa). Over residues 36–54 the composition is skewed to polar residues; that stretch reads TSASLPAADSQSSQTNSMP. 2 tandem repeats follow at residues 59–62 and 76–79. Residues 59–243 are 4 X 4 AA repeats of P-X-X-P; sequence PAKPSNQNLQ…AHSNLGPSRP (185 aa). Positions 99 to 158 are disordered; sequence RFRGSQEDLTVQNGASPCRGSLQDSVAQSPAYSRPLPCLSTSLQEIPKPRRATGSEGGSP. Position 103 is a phosphoserine (S103). Positions 120 to 129 are enriched in polar residues; it reads LQDSVAQSPA. Residues 147–150 form repeat 3; it reads PRRA. T197 is subject to Phosphothreonine. The stretch at 240–243 is repeat 4; sequence PSRP. Residues S245 and S260 each carry the phosphoserine modification. Cysteine methyl ester is present on C645. C645 carries the S-farnesyl cysteine lipid modification. A propeptide spans 646 to 648 (removed in mature form); sequence TVS.

The protein belongs to the inositol 1,4,5-trisphosphate 5-phosphatase type IV family. Interacts (when prenylated) with PDE6D; this is important for normal location in cilia.

It is found in the cytoplasm. Its subcellular location is the cytoskeleton. The protein resides in the cilium axoneme. It localises to the golgi apparatus. The protein localises to the golgi stack membrane. It is found in the cell membrane. Its subcellular location is the cell projection. The protein resides in the ruffle. It localises to the nucleus. The enzyme catalyses a 1,2-diacyl-sn-glycero-3-phospho-(1D-myo-inositol-4,5-bisphosphate) + H2O = a 1,2-diacyl-sn-glycero-3-phospho-(1D-myo-inositol 4-phosphate) + phosphate. It catalyses the reaction a 1,2-diacyl-sn-glycero-3-phospho-(1D-myo-inositol-3,4,5-trisphosphate) + H2O = a 1,2-diacyl-sn-glycero-3-phospho-(1D-myo-inositol-3,4-bisphosphate) + phosphate. The catalysed reaction is a 1,2-diacyl-sn-glycero-3-phospho-(1D-myo-inositol-3,5-bisphosphate) + H2O = a 1,2-diacyl-sn-glycero-3-phospho-(1D-myo-inositol-3-phosphate) + phosphate. Its function is as follows. Phosphatidylinositol (PtdIns) phosphatase that specifically hydrolyzes the 5-phosphate of phosphatidylinositol-3,4,5-trisphosphate (PtdIns(3,4,5)P3), phosphatidylinositol 4,5-bisphosphate PtdIns (4,5)P2 and phosphatidylinositol 3,5-bisphosphate (PtdIns(3,5)P2). Specific for lipid substrates, inactive towards water soluble inositol phosphates. Plays an essential role in the primary cilium by controlling ciliary growth and phosphoinositide 3-kinase (PI3K) signaling and stability. This chain is Phosphatidylinositol polyphosphate 5-phosphatase type IV (Inpp5e), found in Rattus norvegicus (Rat).